The following is a 123-amino-acid chain: Large ribosomal subunit protein eL8 (123 aa).

The protein belongs to the eukaryotic ribosomal protein eL8 family. In terms of assembly, part of the 50S ribosomal subunit. Probably part of the RNase P complex.

The protein localises to the cytoplasm. Multifunctional RNA-binding protein that recognizes the K-turn motif in ribosomal RNA, the RNA component of RNase P, box H/ACA, box C/D and box C'/D' sRNAs. The chain is Large ribosomal subunit protein eL8 from Thermococcus kodakarensis (strain ATCC BAA-918 / JCM 12380 / KOD1) (Pyrococcus kodakaraensis (strain KOD1)).